The sequence spans 84 residues: Small ribosomal subunit protein bS20 (84 aa).

Belongs to the bacterial ribosomal protein bS20 family.

Its function is as follows. Binds directly to 16S ribosomal RNA. This chain is Small ribosomal subunit protein bS20, found in Bacteroides fragilis (strain ATCC 25285 / DSM 2151 / CCUG 4856 / JCM 11019 / LMG 10263 / NCTC 9343 / Onslow / VPI 2553 / EN-2).